We begin with the raw amino-acid sequence, 157 residues long: Ribosome maturation factor RimP (157 aa).

The protein belongs to the RimP family.

The protein localises to the cytoplasm. Required for maturation of 30S ribosomal subunits. The chain is Ribosome maturation factor RimP from Geobacillus kaustophilus (strain HTA426).